The primary structure comprises 355 residues: uncharacterized protein (355 aa).

It belongs to the ycf89 family.

The protein resides in the plastid. Its subcellular location is the chloroplast. This is an uncharacterized protein from Trieres chinensis (Marine centric diatom).